Here is a 232-residue protein sequence, read N- to C-terminus: Early E1A protein (232 aa).

An interaction with RB1 in competition with E2F1 region spans residues 40-48; it reads PTLHDLFDV. Positions 69-84 are enriched in low complexity; sequence TDSSASTEADSGFSPL. The segment at 69–97 is disordered; it reads TDSSASTEADSGFSPLSTPPVSPIPPHPT. The span at 85 to 97 shows a compositional bias: pro residues; sequence STPPVSPIPPHPT. Positions 107-111 match the LXCXE motif, interaction with host RB1 motif; it reads LLCLE. Residues 146 to 164 fold into a zinc finger; sequence CLRCAFYQEQDDNALCGLC. The disordered stretch occupies residues 175–232; that stretch reads SAGAEEEDDEVIFVSAKPGGRKRSAATPCEPDGVSKRPCVPEPEQTEPLDLSLKPRPN. The PXDLS motif, CTBP-binding motif lies at 222–226; sequence PLDLS. The short motif at 228-232 is the Nuclear localization signal element; it reads KPRPN.

It belongs to the adenoviridae E1A protein family. In terms of assembly, interacts with host UBE2I; this interaction interferes with polySUMOylation. Interacts with host RB1; this interaction induces the aberrant dissociation of RB1-E2F1 complex thereby disrupting the activity of RB1 and activating E2F1-regulated genes. Interacts with host ATF7; the interaction enhances ATF7-mediated viral transactivation activity which requires the zinc binding domains of both proteins. Isoform early E1A 32 kDa protein and isoform early E1A 26 kDa protein interact (via N-terminus) with CUL1 and E3 ubiquitin ligase RBX1; these interactions inhibit RBX1-CUL1-dependent elongation reaction of ubiquitin chains and attenuate ubiquitination of SCF(FBXW7) target proteins. Interacts (via PXLXP motif) with host ZMYND11/BS69 (via MYND-type zinc finger); this interaction inhibits E1A mediated transactivation. Interacts with host EP300; this interaction stimulates the acetylation of RB1 by recruiting EP300 and RB1 into a multimeric-protein complex. Interacts with host CTBP1 and CTBP2; this interaction seems to potentiate viral replication. Interacts with host DCAF7. Interacts with host DYRK1A. Interacts with host KPNA4; this interaction allows E1A import into the host nucleus. Interacts with host EP400; this interaction stabilizes MYC. Interacts with host TBP protein; this interaction probably disrupts the TBP-TATA complex.

The protein localises to the host nucleus. In terms of biological role, plays a role in viral genome replication by driving entry of quiescent cells into the cell cycle. Stimulation of progression from G1 to S phase allows the virus to efficiently use the cellular DNA replicating machinery to achieve viral genome replication. E1A protein has both transforming and trans-activating activities. Induces the disassembly of the E2F1 transcription factor from RB1 by direct competition for the same binding site on RB1, with subsequent transcriptional activation of E2F1-regulated S-phase genes and of the E2 region of the adenoviral genome. Release of E2F1 leads to the ARF-mediated inhibition of MDM2 and causes TP53/p53 to accumulate because it is not targeted for degradation by MDM2-mediated ubiquitination anymore. This increase in TP53, in turn, would arrest the cell proliferation and direct its death but this effect is counteracted by the viral protein E1B-55K. Inactivation of the ability of RB1 to arrest the cell cycle is critical for cellular transformation, uncontrolled cellular growth and proliferation induced by viral infection. Interaction with RBX1 and CUL1 inhibits ubiquitination of the proteins targeted by SCF(FBXW7) ubiquitin ligase complex, and may be linked to unregulated host cell proliferation. The tumorigenesis-restraining activity of E1A may be related to the disruption of the host CtBP-CtIP complex through the CtBP binding motif. The sequence is that of Early E1A protein from Canine adenovirus serotype 2 (strain Toronto A 26-61) (CAdV-2).